Here is a 314-residue protein sequence, read N- to C-terminus: Replication initiation protein (314 aa).

The protein belongs to the plasmid replication initiation factor family.

Functionally, this protein is probably a specific topoisomerase involved in initiating replication. This protein is specifically required and may be rate-limiting for replication of the plasmid in vivo. The polypeptide is Replication initiation protein (repC) (Staphylococcus aureus).